Consider the following 148-residue polypeptide: Cuticle protein CP1499 (148 aa).

As to expression, calcified shell.

This is Cuticle protein CP1499 from Cancer pagurus (Rock crab).